Here is a 291-residue protein sequence, read N- to C-terminus: Segregation and condensation protein B (291 aa).

This sequence belongs to the ScpB family. Homodimer. Homodimerization may be required to stabilize the binding of ScpA to the Smc head domains. Component of a cohesin-like complex composed of ScpA, ScpB and the Smc homodimer, in which ScpA and ScpB bind to the head domain of Smc. The presence of the three proteins is required for the association of the complex with DNA.

It is found in the cytoplasm. In terms of biological role, participates in chromosomal partition during cell division. May act via the formation of a condensin-like complex containing Smc and ScpA that pull DNA away from mid-cell into both cell halves. This Mycoplasmoides gallisepticum (strain R(low / passage 15 / clone 2)) (Mycoplasma gallisepticum) protein is Segregation and condensation protein B.